Here is a 511-residue protein sequence, read N- to C-terminus: Pickpocket protein 19 (511 aa).

2 helical membrane-spanning segments follow: residues 59 to 79 (LWLAIVLGAVITGFSLYTVLM) and 471 to 491 (GIISLYIGASVMSFIELLFVL).

It belongs to the amiloride-sensitive sodium channel (TC 1.A.6) family. As to expression, expressed in the tracheal system. Expressed in the taste-sensing terminal organ of the larval head. In adults, expressed in hairs on the tibia, femur and wing margin, but not in hairs on the tarsi of the leg.

Its subcellular location is the membrane. Part of a complex that plays a role in tracheal liquid clearance. In both larvae and adults, contributes to the behavioral response to salt. Probable role in sodium transport. The protein is Pickpocket protein 19 (ppk19) of Drosophila melanogaster (Fruit fly).